Reading from the N-terminus, the 1046-residue chain is UDP-N-acetylglucosamine--peptide N-acetylglucosaminyltransferase 110 kDa subunit (1046 aa).

Residue alanine 2 is modified to N-acetylalanine. Residues serine 3 and serine 4 each carry the phosphoserine; by GSK3-beta; alternate modification. 2 O-linked (GlcNAc) serine; alternate glycosylation sites follow: serine 3 and serine 4. A glycan (O-linked (GlcNAc) serine) is linked at aspartate 10. An O-linked (GlcNAc) threonine glycan is attached at threonine 12. A glycan (O-linked (GlcNAc) serine) is linked at methionine 18. Serine 20 carries the post-translational modification Phosphoserine. Residues 21-54 (FQGLAELAHREYQAGDFEAAERHCMQLWRQEPDN) form a TPR 1 repeat. A glycan (O-linked (GlcNAc) threonine) is linked at glutamate 38. Residues proline 52 and glycine 56 are each glycosylated (O-linked (GlcNAc) serine). TPR repeat units lie at residues 89–122 (AEAYSNLGNVYKERGQLQEAIEHYRHALRLKPDF), 123–156 (IDGYINLAAALVAAGDMEGAVQAYVSALQYNPDL), 157–190 (YCVRSDLGNLLKALGRLEEAKACYLKAIETQPNF), 191–224 (AVAWSNLGCVFNAQGEIWLAIHHFEKAVTLDPNF), 225–258 (LDAYINLGNVLKEARIFDRAVAAYLRALSLSPNH), 259–292 (AVVHGNLACVYYEQGLIDLAIDTYRRAIELQPHF), 293–326 (PDAYCNLANALKEKGSVAEAEDCYNTALRLCPTH), 327–360 (ADSLNNLANIKREQGNIEEAVRLYRKALEVFPEF), 361–394 (AAAHSNLASVLQQQGKLQEALMHYKEAIRISPTF), 395–428 (ADAYSNMGNTLKEMQDVQGALQCYTRAIQINPAF), and 429–462 (ADAHSNLASIHKDSGNIPEAIASYRTALKLKPDF). O-linked (GlcNAc) serine; by autocatalysis glycosylation occurs at serine 399. The residue at position 454 (threonine 454) is a Phosphothreonine; by AMPK. The TPR 13; truncated repeat unit spans residues 463-473 (PDAYCNLAHCL). The DFP motif motif lies at 464 to 466 (DAY). A Nuclear localization signal motif is present at residues 487-503 (KKLVSIVADQLEKNRLP). The active-site Proton acceptor is histidine 508. UDP-binding positions include glutamine 849, lysine 852, 906–908 (APK), 911–914 (HVRR), 930–932 (HTT), and aspartate 935. Tyrosine 989 bears the Phosphotyrosine mark. Residues 991–1010 (KKVRGKVWKQRISSPLFNTK) form a required for phosphatidylinositol 3,4,5-triphosphate binding region.

This sequence belongs to the glycosyltransferase 41 family. O-GlcNAc transferase subfamily. Monomer; may exist in different oligomerization states in cells. Homotrimer, oligomerizes via TPR repeats 6 and 7. Trimerization is not necessary for activity in vitro, however it increases affinity for UDP-GlcNAc. Component of a THAP1/THAP3-HCFC1-OGT complex. Component of the NSL complex at least composed of MOF/KAT8, KANSL1, KANSL2, KANSL3, MCRS1, PHF20, OGT1/OGT, WDR5 and HCFC1. Found in a complex with KIF5B, RHOT1, RHOT2 and TRAK1. Found in a complex composed of at least SINHCAF, SIN3A, HDAC1, SAP30, RBBP4, OGT and TET1. Component of a complex composed of KMT2E/MLL5 (isoform 3), OGT (isoform 1) and USP7; the complex stabilizes KMT2E/MLL5, preventing KMT2E/MLL5 ubiquitination and proteasomal-mediated degradation. Interacts (via TPRs 1-6) with SIN3A; the interaction mediates transcriptional repression in parallel with histone deacetylase. Interacts (via TPR 5-6) with TET1, TET2 and TET3. Interacts (via TPR repeats 6 and 7) with ATXN10. Interacts with NSD2. Interacts with PROSER1; this interaction mediates TET2 O-GlcNAcylation and stability by promoting the interaction between OGT and TET2. In terms of assembly, interacts with USP7. As to quaternary structure, (Microbial infection) Interacts with human T-cell leukemia virus 1/HTLV-1 protein Tax; this interaction increases Tax interacting partner CREB1 O-GlcNAcylation. Ubiquitinated by the SCF(FBXO31) complex, leading to its proteasomal degradation. In terms of processing, phosphorylation on Ser-3 or Ser-4 by GSK3-beta positively regulates its activity. Phosphorylation at Thr-454 by AMPK promotes nuclear localization. Post-translationally, glycosylated via autocatalysis; O-GlcNAcylation at Ser-399 promotes nuclear localization. Glycosylated via autocatalysis; does not affect the enzyme activity but regulates substrate selectivity. As to expression, highly expressed in pancreas and to a lesser extent in skeletal muscle, heart, brain and placenta. Present in trace amounts in lung and liver.

The protein localises to the nucleus. Its subcellular location is the cytoplasm. It localises to the mitochondrion. It is found in the membrane. The protein resides in the cell membrane. The protein localises to the mitochondrion membrane. Its subcellular location is the cell projection. The enzyme catalyses L-seryl-[protein] + UDP-N-acetyl-alpha-D-glucosamine = 3-O-(N-acetyl-beta-D-glucosaminyl)-L-seryl-[protein] + UDP + H(+). The catalysed reaction is L-threonyl-[protein] + UDP-N-acetyl-alpha-D-glucosamine = 3-O-(N-acetyl-beta-D-glucosaminyl)-L-threonyl-[protein] + UDP + H(+). It participates in protein modification; protein glycosylation. Subject to product inhibition by UDP. Catalyzes the transfer of a single N-acetylglucosamine from UDP-GlcNAc to a serine or threonine residue in cytoplasmic and nuclear proteins resulting in their modification with a beta-linked N-acetylglucosamine (O-GlcNAc). Glycosylates a large and diverse number of proteins including histone H2B, AKT1, AMPK, ATG4B, CAPRIN1, EZH2, FNIP1, GSDMD, KRT7, LMNA, LMNB1, LMNB2, RPTOR, HOXA1, PFKL, KMT2E/MLL5, MAPT/TAU, TET2, RBL2, RET, NOD2 and HCFC1. Can regulate their cellular processes via cross-talk between glycosylation and phosphorylation or by affecting proteolytic processing. Involved in insulin resistance in muscle and adipocyte cells via glycosylating insulin signaling components and inhibiting the 'Thr-308' phosphorylation of AKT1, enhancing IRS1 phosphorylation and attenuating insulin signaling. Involved in glycolysis regulation by mediating glycosylation of 6-phosphofructokinase PFKL, inhibiting its activity. Plays a key role in chromatin structure by mediating O-GlcNAcylation of 'Ser-112' of histone H2B: recruited to CpG-rich transcription start sites of active genes via its interaction with TET proteins (TET1, TET2 or TET3). As part of the NSL complex indirectly involved in acetylation of nucleosomal histone H4 on several lysine residues. O-GlcNAcylation of 'Ser-75' of EZH2 increases its stability, and facilitating the formation of H3K27me3 by the PRC2/EED-EZH2 complex. Stabilizes KMT2E/MLL5 by mediating its glycosylation, thereby preventing KMT2E/MLL5 ubiquitination. Regulates circadian oscillation of the clock genes and glucose homeostasis in the liver. Stabilizes clock proteins BMAL1 and CLOCK through O-glycosylation, which prevents their ubiquitination and subsequent degradation. Promotes the CLOCK-BMAL1-mediated transcription of genes in the negative loop of the circadian clock such as PER1/2 and CRY1/2. O-glycosylates HCFC1 and regulates its proteolytic processing and transcriptional activity. Component of a THAP1/THAP3-HCFC1-OGT complex that is required for the regulation of the transcriptional activity of RRM1. Regulates mitochondrial motility in neurons by mediating glycosylation of TRAK1. Promotes autophagy by mediating O-glycosylation of ATG4B. Acts as a regulator of mTORC1 signaling by mediating O-glycosylation of RPTOR and FNIP1: O-GlcNAcylation of RPTOR in response to glucose sufficiency promotes activation of the mTORC1 complex. In terms of biological role, the mitochondrial isoform (mOGT) is cytotoxic and triggers apoptosis in several cell types including INS1, an insulinoma cell line. Functionally, has N-acetylglucosaminyltransferase activity: glycosylates proteins, such as HNRNPU, NEUROD1, NUP62 and PDCD6IP. Displays specific substrate selectivity compared to other isoforms. The polypeptide is UDP-N-acetylglucosamine--peptide N-acetylglucosaminyltransferase 110 kDa subunit (Homo sapiens (Human)).